Reading from the N-terminus, the 107-residue chain is UPF0102 protein CTN_0433 (107 aa).

It belongs to the UPF0102 family.

In Thermotoga neapolitana (strain ATCC 49049 / DSM 4359 / NBRC 107923 / NS-E), this protein is UPF0102 protein CTN_0433.